A 141-amino-acid polypeptide reads, in one-letter code: Hemoglobin subunit alpha-D (141 aa).

In terms of domain architecture, Globin spans 1 to 141 (MLTADDKKLI…VAAVLAEKYR (141 aa)). Positions 58 and 87 each coordinate heme b.

Belongs to the globin family. Heterotetramer of two alpha-D chains and two beta chains. As to expression, red blood cells.

Its function is as follows. Involved in oxygen transport from the lung to the various peripheral tissues. This chain is Hemoglobin subunit alpha-D (HBAD), found in Struthio camelus (Common ostrich).